The following is a 510-amino-acid chain: uncharacterized protein (510 aa).

Disordered stretches follow at residues 1–154 (MGSP…ATFL), 208–227 (DGNHGNQAKNSGPAETGDLA), 234–276 (TRES…QGIL), and 368–480 (NFYT…GCPR). Residue Ser43 is modified to Phosphoserine. Positions 50–60 (PLVSQQDTSEA) are enriched in polar residues. Over residues 78–92 (EEERLGSPEDEKMDG) the composition is skewed to basic and acidic residues. Ser84 is modified (phosphoserine). Polar residues-rich tracts occupy residues 97 to 109 (SQPSVETEQQVAN) and 118 to 135 (QPSSESFCAETETGSNRR). A Phosphoserine modification is found at Ser120. Over residues 139–151 (ASGSEEAKAASAA) the composition is skewed to low complexity. The segment covering 243 to 255 (SSLLTTTRGLTSG) has biased composition (low complexity). A compositionally biased stretch (basic and acidic residues) spans 379–395 (RTKELQLVAKEDTDSTR). Positions 414–441 (SVHQEFSSGDINTRSLQDPGNSQSSGLS) are enriched in polar residues.

This is an uncharacterized protein from Rattus norvegicus (Rat).